Here is a 392-residue protein sequence, read N- to C-terminus: Tryptophan synthase beta chain (392 aa).

Lys84 carries the post-translational modification N6-(pyridoxal phosphate)lysine.

Belongs to the TrpB family. As to quaternary structure, tetramer of two alpha and two beta chains. The cofactor is pyridoxal 5'-phosphate.

It carries out the reaction (1S,2R)-1-C-(indol-3-yl)glycerol 3-phosphate + L-serine = D-glyceraldehyde 3-phosphate + L-tryptophan + H2O. It participates in amino-acid biosynthesis; L-tryptophan biosynthesis; L-tryptophan from chorismate: step 5/5. In terms of biological role, the beta subunit is responsible for the synthesis of L-tryptophan from indole and L-serine. The chain is Tryptophan synthase beta chain from Campylobacter jejuni subsp. doylei (strain ATCC BAA-1458 / RM4099 / 269.97).